The primary structure comprises 164 residues: Xanthine-guanine phosphoribosyltransferase (164 aa).

Residues 41–42 (RG) and 98–106 (DDLTDTGKT) each bind 5-phospho-alpha-D-ribose 1-diphosphate. Residue Asp99 participates in Mg(2+) binding. Guanine is bound by residues Asp102 and Ile145. Residues Asp102 and Ile145 each coordinate xanthine. Residues 102 to 106 (DTGKT) and 144 to 145 (WI) each bind GMP.

It belongs to the purine/pyrimidine phosphoribosyltransferase family. XGPT subfamily. In terms of assembly, homotetramer. It depends on Mg(2+) as a cofactor.

The protein resides in the cell inner membrane. It catalyses the reaction GMP + diphosphate = guanine + 5-phospho-alpha-D-ribose 1-diphosphate. The enzyme catalyses XMP + diphosphate = xanthine + 5-phospho-alpha-D-ribose 1-diphosphate. The catalysed reaction is IMP + diphosphate = hypoxanthine + 5-phospho-alpha-D-ribose 1-diphosphate. The protein operates within purine metabolism; GMP biosynthesis via salvage pathway; GMP from guanine: step 1/1. It participates in purine metabolism; XMP biosynthesis via salvage pathway; XMP from xanthine: step 1/1. Functionally, purine salvage pathway enzyme that catalyzes the transfer of the ribosyl-5-phosphate group from 5-phospho-alpha-D-ribose 1-diphosphate (PRPP) to the N9 position of the 6-oxopurines guanine and xanthine to form the corresponding ribonucleotides GMP (guanosine 5'-monophosphate) and XMP (xanthosine 5'-monophosphate), with the release of PPi. To a lesser extent, also acts on hypoxanthine. The sequence is that of Xanthine-guanine phosphoribosyltransferase from Rhizobium johnstonii (strain DSM 114642 / LMG 32736 / 3841) (Rhizobium leguminosarum bv. viciae).